Consider the following 234-residue polypeptide: Bradykinin-releasing enzyme KR-E-1 (234 aa).

The Peptidase S1 domain occupies 1–225 (VIGGDECNIN…YSDWIQSIIA (225 aa)). 6 disulfides stabilise this stretch: C7–C139, C26–C42, C74–C232, C118–C186, C150–C165, and C176–C201. N20 is a glycosylation site (N-linked (GlcNAc...) asparagine). Residues H41 and D86 each act as charge relay system in the active site. S180 functions as the Charge relay system in the catalytic mechanism.

This sequence belongs to the peptidase S1 family. Snake venom subfamily. As to quaternary structure, monomer. In terms of tissue distribution, expressed by the venom gland.

It is found in the secreted. Functionally, bradykinin-releasing enzyme. Releases bradykinin from bovine HMW kininogen. Has anticoagulant activity. Increases permeability of capillaries by intradermal injection into rabbits. The sequence is that of Bradykinin-releasing enzyme KR-E-1 from Gloydius ussuriensis (Ussuri mamushi).